The chain runs to 158 residues: Dysbindin domain-containing protein 1 (158 aa).

The interval 1–38 is disordered; sequence MEPSEGASPGGLVKEVDMPQAALSAPVPVTGTSGQSPM. Residues serine 95 and serine 119 each carry the phosphoserine modification. The tract at residues 96 to 158 is disordered; the sequence is DDENVASDSH…ILTVERPKED (63 aa). Residues 125–141 show a composition bias toward basic and acidic residues; sequence TRAEQNREKQPFGDPER.

The protein belongs to the dysbindin family.

The polypeptide is Dysbindin domain-containing protein 1 (DBNDD1) (Bos taurus (Bovine)).